A 248-amino-acid chain; its full sequence is Probable phosphatase Sfri_3709 (248 aa).

Zn(2+) contacts are provided by H8, H10, H16, H41, E74, H102, H132, D193, and H195.

Belongs to the PHP family. It depends on Zn(2+) as a cofactor.

The protein is Probable phosphatase Sfri_3709 of Shewanella frigidimarina (strain NCIMB 400).